A 186-amino-acid chain; its full sequence is Alkyl hydroperoxide reductase AhpD (186 aa).

Cysteine 131 functions as the Proton donor in the catalytic mechanism. A disulfide bond links cysteine 131 and cysteine 134. Catalysis depends on cysteine 134, which acts as the Cysteine sulfenic acid (-SOH) intermediate.

This sequence belongs to the AhpD family.

It catalyses the reaction N(6)-[(R)-dihydrolipoyl]-L-lysyl-[lipoyl-carrier protein] + a hydroperoxide = N(6)-[(R)-lipoyl]-L-lysyl-[lipoyl-carrier protein] + an alcohol + H2O. Antioxidant protein with alkyl hydroperoxidase activity. Required for the reduction of the AhpC active site cysteine residues and for the regeneration of the AhpC enzyme activity. The protein is Alkyl hydroperoxide reductase AhpD of Rhodospirillum centenum (strain ATCC 51521 / SW).